Consider the following 368-residue polypeptide: Protein mab-21-like (368 aa).

Belongs to the mab-21 family.

The sequence is that of Protein mab-21-like from Drosophila pseudoobscura pseudoobscura (Fruit fly).